Here is a 410-residue protein sequence, read N- to C-terminus: Large ribosomal subunit protein uL4 (410 aa).

This sequence belongs to the universal ribosomal protein uL4 family.

It localises to the cytoplasm. The sequence is that of Large ribosomal subunit protein uL4 (RPL4) from Tetrahymena thermophila (strain SB210).